The primary structure comprises 747 residues: DNA repair and recombination protein RAD54-like (747 aa).

The disordered stretch occupies residues 1–42; sequence MRRSLAPSQLARRKPEDRSSDDEDWQPGTVTPKKRKSSSETQ. The segment at 2–9 is required for chromatin remodeling, strand pairing activities and coupling of ATPase activity; that stretch reads RRSLAPSQ. Position 38 is a phosphoserine (serine 38). One can recognise a Helicase ATP-binding domain in the interval 170–345; the sequence is SRRIPGSHGC…FSLVHFVNSG (176 aa). 183 to 190 contributes to the ATP binding site; the sequence is DEMGLGKT. The DEGH box signature appears at 296 to 299; that stretch reads DEGH. A Helicase C-terminal domain is found at 500–653; sequence VLDYILAVTR…CVVDEEQDVE (154 aa). Lysine 515 carries the post-translational modification N6-acetyllysine. At serine 572 the chain carries Phosphoserine; by NEK1.

It belongs to the SNF2/RAD54 helicase family. Homohexamer. Interacts (via N-terminus) with RAD51. Interacts with NAP1L1. Interacts with BRD9; this interaction orchestrates RAD51-RAD54 complex formation. Post-translationally, acetylated. Acetylation promotes interaction with BRD9, and subsequently with RAD54, which is essential for homologous recombination (HR). In terms of processing, phosphorylated. Phosphorylation at Ser-572 by NEK1 specifically in G2 phase allows efficient removal of RAD51 filaments from DNA. Hardly detectable in most tissues. Dramatically increased in thymus, spleen and testis.

The protein resides in the nucleus. The enzyme catalyses ATP + H2O = ADP + phosphate + H(+). Plays an essential role in homologous recombination (HR) which is a major pathway for repairing DNA double-strand breaks (DSBs), single-stranded DNA (ssDNA) gaps, and stalled or collapsed replication forks. Acts as a molecular motor during the homology search and guides RAD51 ssDNA along a donor dsDNA thereby changing the homology search from the diffusion-based mechanism to a motor-guided mechanism. Plays also an essential role in RAD51-mediated synaptic complex formation which consists of three strands encased in a protein filament formed once homology is recognized. Once DNA strand exchange occured, dissociates RAD51 from nucleoprotein filaments formed on dsDNA. Deficiency also resulted in an increased frequency of end-to-end chromosome fusions involving telomeres compared to the controls, suggesting a putative role in telomere capping. Non-homologous end joining (NHEJ) and homologous recombination (HR) represent the two major pathways of DNA double-strand break (DSB) repair in eukaryotic cells. LIG4 and RAD54L cooperate to support cellular proliferation, repair spontaneous DSBs, and prevent chromosome and single chromatid aberrations. The protein is DNA repair and recombination protein RAD54-like (Rad54l) of Mus musculus (Mouse).